The following is a 503-amino-acid chain: Variant surface glycoprotein AnTaT 1.1 (503 aa).

Residues M1–A29 form the signal peptide. Cystine bridges form between C45–C172 and C154–C209. Residue N113 is glycosylated (N-linked (GlcNAc...) asparagine). N419 and N432 each carry an N-linked (GlcNAc...) asparagine glycan. Residue D480 is the site of GPI-anchor amidated aspartate attachment. Positions S481–F503 are cleaved as a propeptide — removed in mature form.

Its subcellular location is the cell membrane. In terms of biological role, VSG forms a coat on the surface of the parasite. The trypanosome evades the immune response of the host by expressing a series of antigenically distinct VSGs from an estimated 1000 VSG genes. The polypeptide is Variant surface glycoprotein AnTaT 1.1 (Trypanosoma brucei brucei).